Reading from the N-terminus, the 228-residue chain is 5'-methylthioadenosine/S-adenosylhomocysteine nucleosidase (228 aa).

The active-site Proton acceptor is E11. Residues G77, I151, and 172 to 173 (ME) each bind substrate. The active-site Proton donor is the D196.

It belongs to the PNP/UDP phosphorylase family. MtnN subfamily.

It carries out the reaction S-adenosyl-L-homocysteine + H2O = S-(5-deoxy-D-ribos-5-yl)-L-homocysteine + adenine. The catalysed reaction is S-methyl-5'-thioadenosine + H2O = 5-(methylsulfanyl)-D-ribose + adenine. It catalyses the reaction 5'-deoxyadenosine + H2O = 5-deoxy-D-ribose + adenine. Its pathway is amino-acid biosynthesis; L-methionine biosynthesis via salvage pathway; S-methyl-5-thio-alpha-D-ribose 1-phosphate from S-methyl-5'-thioadenosine (hydrolase route): step 1/2. In terms of biological role, catalyzes the irreversible cleavage of the glycosidic bond in both 5'-methylthioadenosine (MTA) and S-adenosylhomocysteine (SAH/AdoHcy) to adenine and the corresponding thioribose, 5'-methylthioribose and S-ribosylhomocysteine, respectively. Also cleaves 5'-deoxyadenosine, a toxic by-product of radical S-adenosylmethionine (SAM) enzymes, into 5-deoxyribose and adenine. In Staphylococcus haemolyticus (strain JCSC1435), this protein is 5'-methylthioadenosine/S-adenosylhomocysteine nucleosidase.